The primary structure comprises 208 residues: Thymidylate kinase (208 aa).

12-19 contributes to the ATP binding site; that stretch reads GVDGAGKS.

It belongs to the thymidylate kinase family.

The enzyme catalyses dTMP + ATP = dTDP + ADP. Phosphorylation of dTMP to form dTDP in both de novo and salvage pathways of dTTP synthesis. The chain is Thymidylate kinase from Bordetella bronchiseptica (strain ATCC BAA-588 / NCTC 13252 / RB50) (Alcaligenes bronchisepticus).